A 640-amino-acid chain; its full sequence is Envelope glycoprotein (640 aa).

Residues 1–32 (MACSTFSKPLKDKINPWGPLIILGILIRAGVS) form the signal peptide. A receptor-binding domain (RBD) region spans residues 32-236 (SVQHDSPHKV…RVLNIGPRVP (205 aa)). Residues 33-584 (VQHDSPHKVF…FNRSPWFTTL (552 aa)) lie on the Extracellular side of the membrane. Asn-43 and Asn-58 each carry an N-linked (GlcNAc...) asparagine; by host glycan. 2 disulfides stabilise this stretch: Cys-113-Cys-130 and Cys-122-Cys-135. The interval 259-284 (RPPQPPPPGAASIVPETAPPSQQPGT) is disordered. Asn-300 carries N-linked (GlcNAc...) asparagine; by host glycosylation. Intrachain disulfides connect Cys-310–Cys-313, Cys-310–Cys-537, and Cys-529–Cys-536. Residues 310–313 (CWLC) carry the CXXC motif. N-linked (GlcNAc...) asparagine; by host glycans are attached at residues Asn-332, Asn-339, Asn-372, and Asn-408. A fusion peptide region spans residues 446–466 (VSLTLALLLGGLTMGGIAAGV). Positions 477-511 (QQFQQLHAAVQDDLKEVEKSITNLEKSLTSLSEVV) form a coiled coil. An immunosuppression region spans residues 512–528 (LQNRRGLDLLFLKEGGL). The short motif at 529–537 (CAALKEECC) is the CX6CC element. The helical transmembrane segment at 585 to 605 (ISTIMGPLIILLLILLFGPCI) threads the bilayer. Residue Cys-604 is the site of S-palmitoyl cysteine; by host attachment. Residues 606 to 640 (LNRLVQFVKDRISVVQALVLTQQYHQLKPLEYEPQ) are Cytoplasmic-facing. Positions 629-632 (YHQL) match the YXXL motif; contains endocytosis signal motif.

As to quaternary structure, the mature envelope protein (Env) consists of a trimer of SU-TM heterodimers attached by a labile interchain disulfide bond. In terms of processing, specific enzymatic cleavages in vivo yield mature proteins. Envelope glycoproteins are synthesized as an inactive precursor that is N-glycosylated and processed likely by host cell furin or by a furin-like protease in the Golgi to yield the mature SU and TM proteins. The cleavage site between SU and TM requires the minimal sequence [KR]-X-[KR]-R. The R-peptide is released from the C-terminus of the cytoplasmic tail of the TM protein upon particle formation as a result of proteolytic cleavage by the viral protease. Cleavage of this peptide is required for TM to become fusogenic. Post-translationally, the CXXC motif is highly conserved across a broad range of retroviral envelope proteins. It is thought to participate in the formation of a labile disulfide bond possibly with the CX6CC motif present in the transmembrane protein. Isomerization of the intersubunit disulfide bond to an SU intrachain disulfide bond is thought to occur upon receptor recognition in order to allow membrane fusion. The transmembrane protein is palmitoylated. In terms of processing, the R-peptide is palmitoylated.

Its subcellular location is the virion membrane. It localises to the host cell membrane. Its function is as follows. The surface protein (SU) attaches the virus to the host cell by binding to its receptor. This interaction triggers the refolding of the transmembrane protein (TM) and is thought to activate its fusogenic potential by unmasking its fusion peptide. Fusion occurs at the host cell plasma membrane. The transmembrane protein (TM) acts as a class I viral fusion protein. Under the current model, the protein has at least 3 conformational states: pre-fusion native state, pre-hairpin intermediate state, and post-fusion hairpin state. During viral and target cell membrane fusion, the coiled coil regions (heptad repeats) assume a trimer-of-hairpins structure, positioning the fusion peptide in close proximity to the C-terminal region of the ectodomain. The formation of this structure appears to drive apposition and subsequent fusion of viral and target cell membranes. Membranes fusion leads to delivery of the nucleocapsid into the cytoplasm. In Rauscher mink cell focus-inducing virus, this protein is Envelope glycoprotein (env).